The primary structure comprises 308 residues: Lipoyl synthase 2 (308 aa).

Residues Cys-49, Cys-54, Cys-60, Cys-75, Cys-79, Cys-82, and Ser-300 each coordinate [4Fe-4S] cluster. One can recognise a Radical SAM core domain in the interval Tyr-61–Lys-289.

This sequence belongs to the radical SAM superfamily. Lipoyl synthase family. [4Fe-4S] cluster serves as cofactor.

The protein localises to the cytoplasm. The catalysed reaction is [[Fe-S] cluster scaffold protein carrying a second [4Fe-4S](2+) cluster] + N(6)-octanoyl-L-lysyl-[protein] + 2 oxidized [2Fe-2S]-[ferredoxin] + 2 S-adenosyl-L-methionine + 4 H(+) = [[Fe-S] cluster scaffold protein] + N(6)-[(R)-dihydrolipoyl]-L-lysyl-[protein] + 4 Fe(3+) + 2 hydrogen sulfide + 2 5'-deoxyadenosine + 2 L-methionine + 2 reduced [2Fe-2S]-[ferredoxin]. Its pathway is protein modification; protein lipoylation via endogenous pathway; protein N(6)-(lipoyl)lysine from octanoyl-[acyl-carrier-protein]: step 2/2. Functionally, catalyzes the radical-mediated insertion of two sulfur atoms into the C-6 and C-8 positions of the octanoyl moiety bound to the lipoyl domains of lipoate-dependent enzymes, thereby converting the octanoylated domains into lipoylated derivatives. The polypeptide is Lipoyl synthase 2 (Prochlorococcus marinus (strain SARG / CCMP1375 / SS120)).